A 490-amino-acid chain; its full sequence is Histone-lysine N-methyltransferase Smyd1 (490 aa).

The SET domain occupies Glu7–Ile253. Residue Lys17–Arg19 participates in S-adenosyl-L-methionine binding. Cys52, Cys55, Cys65, Cys68, Cys74, Cys78, His86, and Cys90 together coordinate Zn(2+). The MYND-type zinc finger occupies Cys52–Cys90. S-adenosyl-L-methionine contacts are provided by residues His135 and Asn205–His206. Cys208 contacts Zn(2+). S-adenosyl-L-methionine is bound at residue Tyr270–Phe272. Zn(2+) is bound by residues Cys274, Cys276, and Cys279.

Belongs to the class V-like SAM-binding methyltransferase superfamily. Interacts with HDAC1, HDAC2 and HDAC3. Interacts (via MYND-type zinc finger) with NACA isoform skNAC. In terms of tissue distribution, expressed in cardiac and skeletal muscle, lymphocytes and thymus.

The protein resides in the cytoplasm. Its subcellular location is the nucleus. The catalysed reaction is L-lysyl(4)-[histone H3] + 3 S-adenosyl-L-methionine = N(6),N(6),N(6)-trimethyl-L-lysyl(4)-[histone H3] + 3 S-adenosyl-L-homocysteine + 3 H(+). Functionally, methylates histone H3 at 'Lys-4' (H3K4me). Acts as a transcriptional repressor. Essential for cardiomyocyte differentiation and cardiac morphogenesis. The polypeptide is Histone-lysine N-methyltransferase Smyd1 (Smyd1) (Mus musculus (Mouse)).